We begin with the raw amino-acid sequence, 423 residues long: Adenylosuccinate synthetase (423 aa).

GTP is bound by residues 13–19 (GDEGKGK) and 41–43 (GHT). Aspartate 14 functions as the Proton acceptor in the catalytic mechanism. Residues aspartate 14 and glycine 41 each contribute to the Mg(2+) site. IMP-binding positions include 14–17 (DEGK), 39–42 (NAGH), threonine 130, arginine 144, glutamine 223, threonine 238, and arginine 302. The Proton donor role is filled by histidine 42. 298 to 304 (SVTGRKR) provides a ligand contact to substrate. Residues arginine 304 and 410–412 (SVG) contribute to the GTP site.

This sequence belongs to the adenylosuccinate synthetase family. Homodimer. Requires Mg(2+) as cofactor.

It is found in the cytoplasm. The enzyme catalyses IMP + L-aspartate + GTP = N(6)-(1,2-dicarboxyethyl)-AMP + GDP + phosphate + 2 H(+). Its pathway is purine metabolism; AMP biosynthesis via de novo pathway; AMP from IMP: step 1/2. In terms of biological role, plays an important role in the de novo pathway of purine nucleotide biosynthesis. Catalyzes the first committed step in the biosynthesis of AMP from IMP. The sequence is that of Adenylosuccinate synthetase from Porphyromonas gingivalis (strain ATCC BAA-308 / W83).